Consider the following 416-residue polypeptide: Ribosome biogenesis protein WDR12 homolog (416 aa).

The ubiquitin-like (UBL) domain stretch occupies residues 7–89; sequence VQVRFFTKQK…ESVVEIEYLE (83 aa). WD repeat units follow at residues 101–138, 140–184, 189–228, 259–297, 299–338, 344–384, and 388–416; these read VHDD…LAKV, GHTS…ASCV, GHTQ…EGGD, GHTQ…NKQT, TGSK…GQVV, SHQG…TPLY, and GHQD…LILY. The segment at 226–245 is disordered; sequence GGDEGENGSLSKKQKTTGVK.

Belongs to the WD repeat WDR12/YTM1 family.

It localises to the nucleus. It is found in the nucleolus. Its subcellular location is the nucleoplasm. Required for maturation of ribosomal RNAs and formation of the large ribosomal subunit. The polypeptide is Ribosome biogenesis protein WDR12 homolog (Nematostella vectensis (Starlet sea anemone)).